The following is a 33-amino-acid chain: Mu-theraphotoxin-Os1a (33 aa).

Cystine bridges form between C2/C17, C9/C22, and C16/C29. Leucine amide is present on L33.

Belongs to the neurotoxin 10 (Hwtx-1) family. 14 (Hntx-1) subfamily. Monomer. In terms of tissue distribution, expressed by the venom gland.

The protein resides in the secreted. Functionally, potently and reversibly inhibits some human voltage-gated sodium channels (Nav1.1/SCN1A (IC(50)=72.0 nM), Nav1.2/SCN2A (IC(50)=75.5 nM), Nav1.6/SCN8A (IC(50)=115.0 nM), Nav1.7/SCN9A (IC(50)=52.7-129.5 nM), Nav1.3/SCN3A (IC(50)=306.6 nM)). The hNav1.7/SCN9A channel inhibition occurs without any change in steady-state inactivation- and conductance-voltage relationships. On adult mouse DRG neurons, this toxin is approximately 1000-fold more efficient to inhibit tetrodotoxin (TTX)-sensitive than TTX-resistant sodium currents. In vivo, this toxin exhibits analgesic effects in mice pain models. This is Mu-theraphotoxin-Os1a from Omothymus schioedtei (Malaysian earth tiger tarantula).